Here is a 359-residue protein sequence, read N- to C-terminus: Membrane-bound lytic murein transglycosylase C (359 aa).

An N-terminal signal peptide occupies residues 1 to 16 (MKKYLALALIAPLLIS). The N-palmitoyl cysteine moiety is linked to residue cysteine 17. A lipid anchor (S-diacylglycerol cysteine) is attached at cysteine 17.

Belongs to the transglycosylase Slt family.

The protein localises to the cell outer membrane. The enzyme catalyses Exolytic cleavage of the (1-&gt;4)-beta-glycosidic linkage between N-acetylmuramic acid (MurNAc) and N-acetylglucosamine (GlcNAc) residues in peptidoglycan, from either the reducing or the non-reducing ends of the peptidoglycan chains, with concomitant formation of a 1,6-anhydrobond in the MurNAc residue.. Functionally, murein-degrading enzyme. May play a role in recycling of muropeptides during cell elongation and/or cell division. The sequence is that of Membrane-bound lytic murein transglycosylase C from Escherichia coli O81 (strain ED1a).